We begin with the raw amino-acid sequence, 608 residues long: Serine/threonine-protein kinase ROP17 (608 aa).

Residues 1 to 21 form the signal peptide; sequence MELVLCFVIITISGVIRESSA. The N-linked (GlcNAc...) asparagine glycan is linked to asparagine 76. Residues 283 to 579 enclose the Protein kinase domain; sequence LKKRGFLGGG…QQALEQFSLL (297 aa). ATP contacts are provided by residues 289–297 and lysine 312; that span reads LGGGGFGLV. Aspartate 436 serves as the catalytic Proton acceptor.

The protein belongs to the protein kinase superfamily. Ser/Thr protein kinase family. In terms of assembly, interacts with ROP5; interaction with ROP5 does not affect kinase activity. Interacts with human BCL2; the interaction probably promotes BCL2 phosphorylation and degradation.

The protein localises to the secreted. It localises to the cytoplasmic vesicle. The protein resides in the secretory vesicle. It is found in the rhoptry. Its subcellular location is the parasitophorous vacuole membrane. The catalysed reaction is L-threonyl-[protein] + ATP = O-phospho-L-threonyl-[protein] + ADP + H(+). The enzyme catalyses L-seryl-[protein] + ATP = O-phospho-L-seryl-[protein] + ADP + H(+). Its function is as follows. Protein kinase. Virulence factor. Promotes migration of Toxoplasma-infected macrophages through collagen matrix, facilitating parasite transport through tissues and systemic dissemination. Plays a role in the translocation of dense granule effectors, such as GRA16 and GRA24, across the parasitophorous vacuole membrane in Toxoplasma-infected host cells. Phosphorylates mouse IRGB6 (TGTP1/TGTP2), an immunity-related GTPase (IRG) that protects mice from infection by certain intracellular pathogens; the phosphorylation leads to the disassembly of IRGB6 polymers into monomers and dimers. May modulate gene expression in human cells. Promotes autophagy in human cells via modulation of the BCL2-BECN1 pathway. In Toxoplasma gondii, this protein is Serine/threonine-protein kinase ROP17.